The chain runs to 963 residues: Probable sucrose-phosphate synthase 2 (963 aa).

The interval 111–150 (KLRTDTNADMSEDLFEGEKGEDAGDPSVAYGDSTTGSSPK) is disordered.

Belongs to the glycosyltransferase 1 family. As to quaternary structure, homodimer or homotetramer. In terms of tissue distribution, expressed in germinating seeds.

The enzyme catalyses beta-D-fructose 6-phosphate + UDP-alpha-D-glucose = sucrose 6(F)-phosphate + UDP + H(+). The protein operates within glycan biosynthesis; sucrose biosynthesis; sucrose from D-fructose 6-phosphate and UDP-alpha-D-glucose: step 1/2. Activity is regulated by phosphorylation and moderated by concentration of metabolites and light. In terms of biological role, plays a role in photosynthetic sucrose synthesis by catalyzing the rate-limiting step of sucrose biosynthesis from UDP-glucose and fructose- 6-phosphate. Involved in the regulation of carbon partitioning in the leaves of plants. May regulate the synthesis of sucrose and therefore play a major role as a limiting factor in the export of photoassimilates out of the leaf. Plays a role for sucrose availability that is essential for plant growth and fiber elongation. The protein is Probable sucrose-phosphate synthase 2 (SPS2) of Oryza sativa subsp. japonica (Rice).